Reading from the N-terminus, the 99-residue chain is Large ribosomal subunit protein bL21 (99 aa).

It belongs to the bacterial ribosomal protein bL21 family. Part of the 50S ribosomal subunit. Contacts protein L20.

In terms of biological role, this protein binds to 23S rRNA in the presence of protein L20. The protein is Large ribosomal subunit protein bL21 of Mycoplasmopsis agalactiae (strain NCTC 10123 / CIP 59.7 / PG2) (Mycoplasma agalactiae).